Consider the following 1025-residue polypeptide: Multidrug resistance protein MdtC (1025 aa).

Residues 1-6 (MKFFAL) are Cytoplasmic-facing. A helical membrane pass occupies residues 7-29 (FIYRPVATILLSVAITLCGILGF). The Periplasmic portion of the chain corresponds to 30–335 (RMLPVAPLPQ…TIRASLEEVE (306 aa)). A helical transmembrane segment spans residues 336-353 (QTLIISVALVILVVFLFL). Residues 354-359 (RSGRAT) lie on the Cytoplasmic side of the membrane. The helical transmembrane segment at 360 to 379 (IIPAVAVPVSLIGTFAAMYL) threads the bilayer. At 380 to 388 (CGFSLNNLS) the chain is on the periplasmic side. Residues 389–411 (LMALTIATGFVVDDAIVVLENIA) traverse the membrane as a helical segment. Over 412–430 (RHLEAGMKPLQAALQGTRE) the chain is Cytoplasmic. The chain crosses the membrane as a helical span at residues 431 to 453 (VGFTVLSMSLSLVAVFLPLLLMG). Residues 454-467 (GLPGRLLREFAVTL) are Periplasmic-facing. The helical transmembrane segment at 468–490 (SVAIGISLLVSLTLTPMMCGWML) threads the bilayer. Over 491–852 (KASKPREQKR…QVFQETMNSQ (362 aa)) the chain is Cytoplasmic. A helical transmembrane segment spans residues 853-875 (VILIIAAIATVYIVLGILYESYV). Over 876 to 894 (HPLTILSTLPSAGVGALLA) the chain is Periplasmic. The helical transmembrane segment at 895 to 917 (LELFNAPFSLIALIGIMLLIGIV) threads the bilayer. The Cytoplasmic segment spans residues 918–947 (KKNAIMMVDFALEAQRHGNLTPQEAIFQAC). The chain crosses the membrane as a helical span at residues 948–970 (LLRFRPIMMTTLAALFGALPLVL). Topologically, residues 971-984 (SGGDGSELRQPLGI) are periplasmic. A helical membrane pass occupies residues 985 to 1007 (TIVGGLVMSQLLTLYTTPVVYLF). The Cytoplasmic segment spans residues 1008-1025 (FDRLRLRFSRKPKQAVTE).

It belongs to the resistance-nodulation-cell division (RND) (TC 2.A.6) family. MdtC subfamily. In terms of assembly, part of a tripartite efflux system composed of MdtA, MdtB and MdtC. MdtC forms a heteromultimer with MdtB.

Its subcellular location is the cell inner membrane. In terms of biological role, the MdtABC tripartite complex confers resistance against novobiocin and deoxycholate. This Escherichia coli O6:H1 (strain CFT073 / ATCC 700928 / UPEC) protein is Multidrug resistance protein MdtC.